The sequence spans 189 residues: dCTP deaminase (189 aa).

Residues lysine 112 to arginine 117, threonine 136 to glutamate 138, glutamine 157, tyrosine 171, and glutamine 181 contribute to the dCTP site. Glutamate 138 acts as the Proton donor/acceptor in catalysis.

This sequence belongs to the dCTP deaminase family. In terms of assembly, homotrimer.

It carries out the reaction dCTP + H2O + H(+) = dUTP + NH4(+). The protein operates within pyrimidine metabolism; dUMP biosynthesis; dUMP from dCTP (dUTP route): step 1/2. Its function is as follows. Catalyzes the deamination of dCTP to dUTP. The sequence is that of dCTP deaminase from Halorhodospira halophila (strain DSM 244 / SL1) (Ectothiorhodospira halophila (strain DSM 244 / SL1)).